The following is a 208-amino-acid chain: Probable GTP-binding protein EngB (208 aa).

Positions 23–205 (LTSEMVILGR…RQTLLKYLLT (183 aa)) constitute an EngB-type G domain. GTP contacts are provided by residues 31 to 38 (GRSNVGKS), 57 to 61 (GKTRL), 84 to 87 (DLPG), 154 to 157 (TKFD), and 182 to 184 (FNA). Mg(2+) contacts are provided by S38 and T59.

This sequence belongs to the TRAFAC class TrmE-Era-EngA-EngB-Septin-like GTPase superfamily. EngB GTPase family. Mg(2+) is required as a cofactor.

Functionally, necessary for normal cell division and for the maintenance of normal septation. This chain is Probable GTP-binding protein EngB, found in Helicobacter pylori (strain G27).